The primary structure comprises 142 residues: Large ribosomal subunit protein bL17 (142 aa).

Belongs to the bacterial ribosomal protein bL17 family. In terms of assembly, part of the 50S ribosomal subunit. Contacts protein L32.

In Wolbachia pipientis wMel, this protein is Large ribosomal subunit protein bL17.